Here is a 780-residue protein sequence, read N- to C-terminus: MQDEQDKYLKNIDFYEILSLVSKYVSNPDTVNLLSNQKILKTKESLEKIFSFVSLIRMLFESCKGYPNSFINSLKYPISLLLKENSRVSIENLRDIIVFLDEVLRINLFLHKNSDIKHLNVQILSDLLFLNPELKNLLNELKEHIDVDALELKSGVVKEYDSIEFEIKNLNRRVENQIKKIISLNAEYLTSNFVCYKSNKYTLALKSNFKGKIKGNIISISSSGETFYIEPNDIVNANNRLNYLSLEKERIILKILRNLSAKVHSNIVLLDNLYNNFLYYDSLKARAIYGIKTKGVFPEISNVLNIFDAHHPLLKDSKAITFTPAENRVVIITGPNAGGKTVTLKTIGLLSAMFQFGIPIVVGESSTFKIFDNIFIDIGDEQSISNSLSTFSSHMSNISYILKHTTKDSLVIFDEFCSGTDIDQGQALAISILEYLININSYVLISTHYNALKYFAYTHEGVVNASMRMDLETMQPNYNLIFSIPGESYAFNVASKALIDRSIVIRANEIYSSQKTEINEILEKLIEKEKDLLLIKESMDKKLIQIELQEKELENFYQDLLLREKNIETKLLNEQNEFLKNSRKVLENLVREIKEGNINVAKNKAFISDLEKNVDLKTNKVNSLNNKRNVVADFKIGDKVRIVNSNAKGKIVGISKKKITVNVGAFNVSVSSSEISLENFKEKKENGKNFNFSIDYNKENLLSFTIDIRGMRSVDALDFLNKKIDNIILNGINKFEIIHGKGEGHLMREVHNLLKELKFIRKYYFAHPSDGGSGKTIVEI.

Residue 334–341 (GPNAGGKT) participates in ATP binding. Positions 706–780 (IDIRGMRSVD…GGSGKTIVEI (75 aa)) constitute a Smr domain.

It belongs to the DNA mismatch repair MutS family. MutS2 subfamily. In terms of assembly, homodimer. Binds to stalled ribosomes, contacting rRNA.

In terms of biological role, endonuclease that is involved in the suppression of homologous recombination and thus may have a key role in the control of bacterial genetic diversity. Functionally, acts as a ribosome collision sensor, splitting the ribosome into its 2 subunits. Detects stalled/collided 70S ribosomes which it binds and splits by an ATP-hydrolysis driven conformational change. Acts upstream of the ribosome quality control system (RQC), a ribosome-associated complex that mediates the extraction of incompletely synthesized nascent chains from stalled ribosomes and their subsequent degradation. Probably generates substrates for RQC. The chain is Endonuclease MutS2 from Borreliella burgdorferi (strain ATCC 35210 / DSM 4680 / CIP 102532 / B31) (Borrelia burgdorferi).